Here is a 1138-residue protein sequence, read N- to C-terminus: Phosphatidylserine decarboxylase proenzyme 2 (1138 aa).

One can recognise a C2 1 domain in the interval 1–122 (MRIIKGRKRG…SNSGLSSHSH (122 aa)). Disordered stretches follow at residues 90–166 (TGAP…PGST), 269–305 (MRSSSSLPPPLEDMLSNSSAVSGNEIRREKPYSDTDL), and 413–448 (AVSENDITSVDDEESENQQESDEEFDIYNEDEREDS). Low complexity predominate over residues 98–121 (SRPRTTTANTSSSTLSNSGLSSHS). Residues 125–135 (RNLNVTSKGNQ) are compositionally biased toward polar residues. Residues 136–166 (TSTSINSVSSSATPAPSHSSSSLSTTGPGST) are compositionally biased toward low complexity. Basic and acidic residues predominate over residues 293 to 305 (EIRREKPYSDTDL). Residues 421–448 (SVDDEESENQQESDEEFDIYNEDEREDS) are compositionally biased toward acidic residues. Residues 478–600 (RRAKSNFFIS…QQQQHENEWI (123 aa)) enclose the C2 2 domain. Residues aspartate 571, serine 574, and aspartate 577 each contribute to the Ca(2+) site. Residues aspartate 899, histidine 956, and serine 1043 each act as charge relay system; for autoendoproteolytic cleavage activity in the active site. The Schiff-base intermediate with substrate; via pyruvic acid; for decarboxylase activity role is filled by serine 1043. Serine 1043 bears the Pyruvic acid (Ser); by autocatalysis mark.

The protein belongs to the phosphatidylserine decarboxylase family. PSD-B subfamily. Eukaryotic type II sub-subfamily. In terms of assembly, heterodimer of a large membrane-associated beta subunit and a small pyruvoyl-containing alpha subunit. Interacts with pstB2/PDR17. This interaction may be a means to structurally tether the donor membrane (ER) harboring PstB2/PDR17 to acceptor membranes (Golgi/endosomes) harboring PSD2 during PtdSer transport to the site of PtdEtn synthesis. Pyruvate serves as cofactor. The cofactor is Ca(2+). Is synthesized initially as an inactive proenzyme. Formation of the active enzyme involves a self-maturation process in which the active site pyruvoyl group is generated from an internal serine residue via an autocatalytic post-translational modification. Two non-identical subunits are generated from the proenzyme in this reaction, and the pyruvate is formed at the N-terminus of the alpha chain, which is derived from the carboxyl end of the proenzyme. The autoendoproteolytic cleavage occurs by a canonical serine protease mechanism, in which the side chain hydroxyl group of the serine supplies its oxygen atom to form the C-terminus of the beta chain, while the remainder of the serine residue undergoes an oxidative deamination to produce ammonia and the pyruvoyl prosthetic group on the alpha chain. During this reaction, the Ser that is part of the protease active site of the proenzyme becomes the pyruvoyl prosthetic group, which constitutes an essential element of the active site of the mature decarboxylase.

The protein localises to the golgi apparatus membrane. The protein resides in the endosome membrane. It carries out the reaction a 1,2-diacyl-sn-glycero-3-phospho-L-serine + H(+) = a 1,2-diacyl-sn-glycero-3-phosphoethanolamine + CO2. It functions in the pathway phospholipid metabolism; phosphatidylethanolamine biosynthesis; phosphatidylethanolamine from CDP-diacylglycerol: step 2/2. In terms of biological role, catalyzes the formation of phosphatidylethanolamine (PtdEtn) from phosphatidylserine (PtdSer). Plays a central role in phospholipid metabolism and in the interorganelle trafficking of phosphatidylserine. Phosphatidylethanolamine produced by PSD2 is insufficient to completely provide the PtdEtn pool required by mitochondria under respiratory conditions. PSD2 is also involved in the PtdSer transport step to the site of PtdEtn synthesis on the Golgi/endosome membranes. Required for normal heavy metal resistance. This chain is Phosphatidylserine decarboxylase proenzyme 2, found in Saccharomyces cerevisiae (strain ATCC 204508 / S288c) (Baker's yeast).